The sequence spans 476 residues: Riboflavin transporter rft-2 (476 aa).

A helical membrane pass occupies residues 1-21 (MGCSAATFILVALFGSSSWMG). Topologically, residues 22–41 (TNSVWMQLPLLTSELPEQWN) are cytoplasmic. Residues 42-62 (LPSYLAGVVQIACIVPLIYTI) traverse the membrane as a helical segment. Residues 63 to 75 (LHKGVKSFTIPTA) lie on the Extracellular side of the membrane. A helical transmembrane segment spans residues 76–96 (PLIIALLSLACCCQLGLSFFW). The Cytoplasmic segment spans residues 97–113 (SDYSEIFGAPRSWPLYS). A helical membrane pass occupies residues 114–134 (LLFGLAIVNAMSNVLFMPFMA). Topologically, residues 135-140 (QFHPAY) are extracellular. A helical transmembrane segment spans residues 141-161 (LNAYFVGMGLSSLAPSLLSLA). The Cytoplasmic portion of the chain corresponds to 162-185 (QGTSMFKCDEKGVAERFPPNFSVS). A helical transmembrane segment spans residues 186–206 (IFFFVIFSFTCVALFAFIALY). Topologically, residues 207–306 (RSGAHTHFAT…HPVDYITGVK (100 aa)) are extracellular. A disordered region spans residues 215–249 (ATPNKKEPNEGTPLKKDLNNTSSSRKGDDEDESPI). A compositionally biased stretch (basic and acidic residues) spans 218–232 (NKKEPNEGTPLKKDL). Asparagine 233 carries N-linked (GlcNAc...) asparagine glycosylation. Residues 307–327 (FTFLLFTTALVNAQMNGIITS) form a helical membrane-spanning segment. Topologically, residues 328–342 (VQSYAALPYSQATYH) are cytoplasmic. Residues 343–363 (FAVTLSNVVSPLSSFLPFFIS) form a helical membrane-spanning segment. Topologically, residues 364–366 (VRS) are extracellular. A helical transmembrane segment spans residues 367-387 (IPVLAILTACSTAMTAFIVYL). The Cytoplasmic portion of the chain corresponds to 388-393 (AALSPN). The helical transmembrane segment at 394 to 414 (LIFNSVTIGSALSIGGSLIAA) threads the bilayer. Residues 415 to 437 (GLHSYLRVVFASLLREGHQSESR) are Extracellular-facing. A helical membrane pass occupies residues 438–458 (LFWCGVFIQIGSFIGSAVMFP). At 459-476 (LVNIAHLFTSAPQCKSIS) the chain is on the cytoplasmic side.

It belongs to the riboflavin transporter family. As to expression, expressed in intestine and pharynx.

It localises to the cell membrane. It carries out the reaction riboflavin(in) = riboflavin(out). In terms of biological role, riboflavin transporter. In Caenorhabditis elegans, this protein is Riboflavin transporter rft-2.